The chain runs to 392 residues: Putative transactivator/viroplasmin protein (392 aa).

Residues 1–88 are a coiled coil; it reads MEDMMKQILE…NVEEQYQWKN (88 aa). The disordered stretch occupies residues 358 to 392; it reads EIEKEEPGEEKNLEDVSTDDNNEKKKIRSVIVKET.

It belongs to the caulimoviridae viroplasmin family.

Its subcellular location is the host cytoplasm. Enhances the translation of downstream ORFs on polycistronic mRNAs derived from cassava vein mosaic virus. This is Putative transactivator/viroplasmin protein from Cassava vein mosaic virus (CsVMV).